Reading from the N-terminus, the 688-residue chain is MSAQASVAEVKRDKPWIIRTYAGHSTAAESNKLYRGNLAKGQTGLSVAFDLPTQTGYDPDHELARGEVGKVGVSIAHLGDMRALFDQIPLAQMNTSMTINATAPWLLSLYLAVAEEQGAPLAALQGTTQNDIIKEYLSRGTYVFPPAPSLRLTKDVILFTTKNVPKWNPMNVCSYHLQEAGATPVQELSYALAIAIAVLDTVRDDPDFDEASFSDVFSRISFFVNAGMRFVTEICKMRAFAELWDEIAQERYGITDAKKRIFRYGVQVNSLGLTEQQPENNVHRILIEMLAVTLSKRARARAVQLPAWNEALGLPRPWDQQWSMRMQQILAFETDLLEYDDIFDGSTVIEARVEALKEQTRAELTRIAEIGGAVTAVEAGELKRALVESNARRISAIEKGEQIVVGVNKWQQGEPSPLTAGDGAIFTVSETVEMEAETRIREWRSKRDERAVGQALADLEQAARSGANIMPPSIAAAKAGVTTGEWGQRLREVFGEYRAPTGVTLQTVTSGAAEDARLLIADLGERLGETPRLVVGKPGLDGHSNGAEQIALRARDVGFDVTYDGIRQTPTEIVAKAKERGAHVIGLSVLSGSHVPLVREVKAKLREAGLDHVPVVVGGIISTEDELVLKNMGVTAVYTPKDYELDKIMVGLAKVVERALDKRAADRADTEAGVPGAPKRNESGAQVF.

The 130-residue stretch at 530–659 (TPRLVVGKPG…VGLAKVVERA (130 aa)) folds into the B12-binding domain. Histidine 543 contributes to the adenosylcob(III)alamin binding site. A disordered region spans residues 666 to 688 (DRADTEAGVPGAPKRNESGAQVF).

This sequence belongs to the methylmalonyl-CoA mutase family. It depends on adenosylcob(III)alamin as a cofactor.

It carries out the reaction (2R)-ethylmalonyl-CoA = (2S)-methylsuccinyl-CoA. Its function is as follows. Radical enzyme that catalyzes the transformation of (2R)-ethylmalonyl-CoA to (2S)-methylsuccinyl-CoA. Is involved in the ethylmalonyl-CoA pathway for acetyl-CoA assimilation required for M.extorquens growth on one- and two-carbon compounds such as ethylamine, methanol or ethanol as sole carbon source. This enzyme acts as a regulatory metabolic control point in this pathway, that allows M.extorquens to efficiently restore metabolic balance when challenged with a sudden change in the growth substrate. In Methylorubrum extorquens (strain ATCC 14718 / DSM 1338 / JCM 2805 / NCIMB 9133 / AM1) (Methylobacterium extorquens), this protein is Ethylmalonyl-CoA mutase.